A 25-amino-acid chain; its full sequence is Small ribosomal subunit protein eS32B (25 aa).

Positions Met-1–Lys-25 are disordered.

The protein belongs to the eukaryotic ribosomal protein eS32 family. Component of the small ribosomal subunit (SSU). Mature yeast ribosomes consist of a small (40S) and a large (60S) subunit. The 40S small subunit contains 1 molecule of ribosomal RNA (18S rRNA) and 33 different proteins (encoded by 57 genes). The large 60S subunit contains 3 rRNA molecules (25S, 5.8S and 5S rRNA) and 46 different proteins (encoded by 81 genes).

It localises to the cytoplasm. In terms of biological role, component of the ribosome, a large ribonucleoprotein complex responsible for the synthesis of proteins in the cell. The small ribosomal subunit (SSU) binds messenger RNAs (mRNAs) and translates the encoded message by selecting cognate aminoacyl-transfer RNA (tRNA) molecules. The large subunit (LSU) contains the ribosomal catalytic site termed the peptidyl transferase center (PTC), which catalyzes the formation of peptide bonds, thereby polymerizing the amino acids delivered by tRNAs into a polypeptide chain. The nascent polypeptides leave the ribosome through a tunnel in the LSU and interact with protein factors that function in enzymatic processing, targeting, and the membrane insertion of nascent chains at the exit of the ribosomal tunnel. This is Small ribosomal subunit protein eS32B from Saccharomyces cerevisiae (strain ATCC 204508 / S288c) (Baker's yeast).